Reading from the N-terminus, the 103-residue chain is Acyl carrier protein (103 aa).

A Carrier domain is found at 14–89 (NIVSNIVQDI…EFIDFTLQTI (76 aa)). Position 49 is an O-(pantetheine 4'-phosphoryl)serine (Ser-49).

It belongs to the acyl carrier protein (ACP) family. In terms of processing, 4'-phosphopantetheine is transferred from CoA to a specific serine of apo-ACP by AcpS. This modification is essential for activity because fatty acids are bound in thioester linkage to the sulfhydryl of the prosthetic group.

It is found in the plastid. The protein localises to the cyanelle. It functions in the pathway lipid metabolism; fatty acid biosynthesis. Carrier of the growing fatty acid chain in fatty acid biosynthesis. This chain is Acyl carrier protein, found in Cyanophora paradoxa.